An 833-amino-acid chain; its full sequence is MTFYDHTAIEPKWQAFWADNHTFKTGTDASKPKFYALDMFPYPSGAGLHVGHPEGYTATDILSRFKRAQGHNVLHPMGWDAFGLPAEQYAMDTGNDPAEFTAENIANFKRQINALGFSYDWDREVNTTDPNYYKWTQWIFTKLYEKGLAYEAEVPVNWVEELGTAIANEEVLPDGTSERGGYPVVRKPMRQWMLKITVYAERLLEDLEEVDWPESIKDMQRNWIGKSTGANVTFKVKDTDKNFTVFTTRPDTLFGATYAVLAPEHALVDAITTADQAEAVADYKRQASLKSDLARTDLAKEKTGVWTGSYAINPVNGKEIPVWIADYVLASYGTGAIMAVPAHDERDWEFAKQFNLDIIPVLEGGNVEEAAFTEDGLHINSGFLDGLDKASAIAKMVEWLEAEGVGNEKVTYRLRDWLFSRQRYWGEPIPIIHWEDGTSTAVPESELPLVLPVTKDIRPSGTGESPLANVTDWLEVTREDGVKGRRETNTMPQWAGSSWYYLRYIDPHNTEKLADEELLKQWLPVDIYVGGAEHAVLHLLYARFWHKVLYDLGVVPTKEPFQKLFNQGMILGTSYRDSRGALVATDKVEKRDGSFFHVETGEELEQAPAKMSKSLKNVVNPDDVVEQYGADTLRVYEMFMGPLDASIAWSEEGLEGSRKFLDRVYRLITTKEITEENSGALDKVYNETVKAVTEQVDQMKFNTAIAQLMVFVNAANKEDKLFSDYAKGFVQLIAPFAPHLGEELWQALTASGESISYVPWPSYDESKLVENDVEIVVQIKGKVKAKLVVAKDLSREELQEVALANEKVQAEIAGKDIIKVIAVPNKLVNIVIK.

Positions 41 to 52 (PYPSGAGLHVGH) match the 'HIGH' region motif. Positions 610-614 (KMSKS) match the 'KMSKS' region motif. Residue lysine 613 coordinates ATP.

The protein belongs to the class-I aminoacyl-tRNA synthetase family.

It localises to the cytoplasm. It catalyses the reaction tRNA(Leu) + L-leucine + ATP = L-leucyl-tRNA(Leu) + AMP + diphosphate. The sequence is that of Leucine--tRNA ligase from Streptococcus pyogenes serotype M3 (strain ATCC BAA-595 / MGAS315).